The sequence spans 35 residues: Photosystem II reaction center protein T (35 aa).

A helical transmembrane segment spans residues 3 to 23; that stretch reads ALVYTFLLVSTLGIIFFAIFF.

This sequence belongs to the PsbT family. In terms of assembly, PSII is composed of 1 copy each of membrane proteins PsbA, PsbB, PsbC, PsbD, PsbE, PsbF, PsbH, PsbI, PsbJ, PsbK, PsbL, PsbM, PsbT, PsbY, PsbZ, Psb30/Ycf12, at least 3 peripheral proteins of the oxygen-evolving complex and a large number of cofactors. It forms dimeric complexes.

The protein resides in the plastid. It localises to the chloroplast thylakoid membrane. Functionally, found at the monomer-monomer interface of the photosystem II (PS II) dimer, plays a role in assembly and dimerization of PSII. PSII is a light-driven water plastoquinone oxidoreductase, using light energy to abstract electrons from H(2)O, generating a proton gradient subsequently used for ATP formation. This Ceratophyllum demersum (Rigid hornwort) protein is Photosystem II reaction center protein T.